The primary structure comprises 705 residues: ATP-dependent DNA helicase Q-like 2 (705 aa).

Residues 1 to 30 (MESEAIQEDLQNLDVELKDVQGQISALIEH) are a coiled coil. The Helicase ATP-binding domain maps to 98 to 273 (INAIMTGRDV…IEMLHIPKCV (176 aa)). An ATP-binding site is contributed by 111 to 118 (MAAGGGKS). A DEAH box motif is present at residues 217-220 (DEAH). A Helicase C-terminal domain is found at 298-450 (VVDEIAEFIR…DIVRYCQSKT (153 aa)). Residues 591-670 (SITFSGLELK…MRHEAVSEQL (80 aa)) enclose the HRDC domain. Positions 668 to 705 (EQLVEDPTKEETCKSRLRKRAKTQKDVVLVESSGEEEA) are disordered.

It belongs to the helicase family. RecQ subfamily. In terms of assembly, interacts with WEX. Mg(2+) is required as a cofactor. Mn(2+) serves as cofactor. Expressed in shoots and flowers. Expressed in young leaves, inflorescences, roots, shoot apical meristem, young siliques, and mature green siliques.

It localises to the nucleus. The catalysed reaction is Couples ATP hydrolysis with the unwinding of duplex DNA by translocating in the 3'-5' direction.. The enzyme catalyses ATP + H2O = ADP + phosphate + H(+). 3'-5' DNA helicase that may play a role in the repair of DNA. Its DNA unwinding activity in vitro is dependent on magnesium, and ATP or dATP. Can use GTP/dGTP, CTP/dCTP or UTP/dUTP as nucleotide cofactors. Catalyzes Holliday junction branch migration and replication fork regression. Disrupts D-loop structures. Unwinds G-quadruplex DNA, found in telomeric DNA. The sequence is that of ATP-dependent DNA helicase Q-like 2 from Arabidopsis thaliana (Mouse-ear cress).